Consider the following 236-residue polypeptide: 7-cyano-7-deazaguanine synthase (236 aa).

C7–A17 is a binding site for ATP. The Zn(2+) site is built by C185, C193, C196, and C199.

The protein belongs to the QueC family. It depends on Zn(2+) as a cofactor.

It carries out the reaction 7-carboxy-7-deazaguanine + NH4(+) + ATP = 7-cyano-7-deazaguanine + ADP + phosphate + H2O + H(+). The protein operates within purine metabolism; 7-cyano-7-deazaguanine biosynthesis. Functionally, catalyzes the ATP-dependent conversion of 7-carboxy-7-deazaguanine (CDG) to 7-cyano-7-deazaguanine (preQ(0)). In Rhizobium johnstonii (strain DSM 114642 / LMG 32736 / 3841) (Rhizobium leguminosarum bv. viciae), this protein is 7-cyano-7-deazaguanine synthase.